The primary structure comprises 366 residues: DNA double-strand break repair protein Mre11 (366 aa).

Positions 8, 10, 49, and 84 each coordinate Mn(2+). Residue His-85 is the Proton donor of the active site. Mn(2+)-binding residues include His-158, His-186, and His-188.

The protein belongs to the MRE11/RAD32 family. In terms of assembly, homodimer. Forms a heterotetramer composed of two Mre11 subunits and two Rad50 subunits. Requires Mn(2+) as cofactor.

Its activity is regulated as follows. Nuclease activity is regulated by Rad50. Functionally, part of the Rad50/Mre11 complex, which is involved in the early steps of DNA double-strand break (DSB) repair. The complex may facilitate opening of the processed DNA ends to aid in the recruitment of HerA and NurA. Mre11 binds to DSB ends and has both double-stranded 3'-5' exonuclease activity and single-stranded endonuclease activity. The sequence is that of DNA double-strand break repair protein Mre11 from Methanocaldococcus jannaschii (strain ATCC 43067 / DSM 2661 / JAL-1 / JCM 10045 / NBRC 100440) (Methanococcus jannaschii).